Reading from the N-terminus, the 1299-residue chain is MVAHKKSKKKSKKQHGSAGEKELHESKIHAEIIDDEAEYPTSRVIKRAPNGDVIVESLPEEESLDRSELNQDHRSGSSSSSTNSGGVTNTADCNADADNEEVEDTKWPIKLDTHWESLSLEERRNILRISKDELFDMIKSYKNMHNCDCSMCGRHNNLNIEQEIEQIYCELYDSAREEDSDTDFVQFHLKLIKEYQNGSNNTHHHMRHHGDKQDSNICHENFAHNDNDDNNDSTNKNAFLSSILPKEKNASTSENECTNDFLDSLSEDSAIKYCLSEGAIGLDKSYQVDFLGKEEVDSNMDTIPNSDNKTQTALDWKHEIEQFKSSKQKQVSESTTGKEALPPINDIDNTNEVIPEHDEFDSKLLHFAKTVVSSHPHIAEEFINRAMMYPHIKAITEDMMNNEGEGLKRAMESLVLQQELQDWRENMAVSIEKKIYEMDPTEPVIDVSESDSHENERVNGPANALEENNKKDVIESDSLDRPSLVDNNKVDSLIDSIPFKFVKDPKAVASLKNAFYDIFTNKTRRSEIDQDDKEYKEELERLRNEISADEDQASYEWSNDEYEESNDHDEDAEGYVDDECIDDHHLDSGYDDENEDEDIIYDDLHENVKLNEDPSAVPNGHTQLIHHDNSVTSNVSEDGIDDNYDSELDHAERLEEGRRLIQIAITKLLQKKLIASYQEKEAEKNRERLLMELEAEENQKKEKEKKKLKKKEKEKEKKRQQQLAKEEEKKRQEEEEIRLKKEAEEKEIARREAQRKKVEEAKRKNDEKRKKKLAEQRRREEEQERIRKEKEEQKRQREEEQKQKKMEKERKQREFEEQRLLKKKEAEQLQKLKENQKLNEKSMQKNQDTTTEGVPYGSVSTNPLQNNSTLNDDIFNMINEVSKSLSSSPSRNQNDLLGSSVLSNVDHQGGLNAGNVFIPPSLSMSEMSPHAQAGFNTLGSSLQPNLLNGWDQQSSTQAYYHANQPSSSEAPGLLPLSHGGSSSKFSSFADTTVDVTDDVNNLTSFLKDTTINDISLGSTSSIPAQNLDPVNMAPRPQSAVYNQPNLWNNDPNQRLSNFGQQHVQQNPISSSHSQPRRSIWDTGAENTFGVASANNFASNIWDTPTSTPALPNTLLSSQVAATSVDSYEEVLAKTYKMLSPDNSFVPLDKLYQTSLTQINAKSVLSYPQFISTLVSMKNSYNTELLNDNTGLLAYCRMGSVPVPSGLPSYNRQNTFPHATTQVQSDSQQINSVSTPISNPLPQPSSVFNDVHYNQTATTSPANHGNPIPGPTSTIASDPSNFVNFGQSYPNSYQTGNIWS.

Residues 1–15 (MVAHKKSKKKSKKQH) are compositionally biased toward basic residues. Disordered stretches follow at residues 1–104 (MVAH…EVED), 200–237 (NNTH…TNKN), 324–347 (KSSK…INDI), 446–486 (DVSE…SLVD), 543–573 (RNEI…EDAE), 694–816 (EAEE…REFE), 834–868 (ENQK…QNNS), and 960–981 (YHAN…HGGS). Basic and acidic residues-rich tracts occupy residues 18–32 (AGEK…HAEI) and 64–75 (LDRSELNQDHRS). A compositionally biased stretch (low complexity) spans 76–90 (GSSSSSTNSGGVTNT). Residues 325–337 (SSKQKQVSESTTG) are compositionally biased toward polar residues. Basic and acidic residues predominate over residues 467–480 (ENNKKDVIESDSLD). Over residues 547–573 (SADEDQASYEWSNDEYEESNDHDEDAE) the composition is skewed to acidic residues. A coiled-coil region spans residues 675 to 847 (ASYQEKEAEK…LNEKSMQKNQ (173 aa)). 2 stretches are compositionally biased toward basic and acidic residues: residues 711–816 (KEKE…REFE) and 834–843 (ENQKLNEKSM). Composition is skewed to polar residues over residues 844–868 (QKNQ…QNNS) and 960–969 (YHANQPSSSE). A compositionally biased stretch (low complexity) spans 971–981 (PGLLPLSHGGS).

It belongs to the NST1 family.

Its subcellular location is the cytoplasm. May act as a negative regulator of salt tolerance. The protein is Stress response protein NST1 (NST1) of Kluyveromyces lactis (strain ATCC 8585 / CBS 2359 / DSM 70799 / NBRC 1267 / NRRL Y-1140 / WM37) (Yeast).